The following is a 322-amino-acid chain: L-asparaginase (322 aa).

The region spanning 3–322 (KKVALITTGG…KEGIKDKFCY (320 aa)) is the Asparaginase/glutaminase domain. The O-isoaspartyl threonine intermediate role is filled by Thr13. Substrate is bound by residues Ser56 and 89 to 90 (TD).

The protein belongs to the asparaginase 1 family. In terms of assembly, homotetramer.

The protein resides in the cytoplasm. The catalysed reaction is L-asparagine + H2O = L-aspartate + NH4(+). The protein is L-asparaginase (ansA) of Bacillus licheniformis.